The chain runs to 890 residues: MSQPFRSADIRQAFIDFFISKQHTPVASSSLIPHNDPTLLFTNAGMNQFKETFLGMEPRDYTRAVTSQKCVRAGGKHNDLDNVGYTARHHTFFEMLGNFSFGDYFKQAGIGYIWEFLTSDEWLAIDKNRLYVTIYETDDEAFDIWHKDIGIPSERIIRIGDNKGAPYASDNFWTMGDTGPCGPCTEVFYDHGADIEGGLPGTPEEDGDRYIEIWNCVFMQFNRQKDGSMLPLPAPSVDTGMGLERISAIMQGVHGNYEIDLFVHLMDAAAEILEIENQQQSSLKVIADHIRAVSFLIADGVTPSNEGRGYVLRRIIRRAVRHGNKLGADSEFFYKMVAPLVAEMGTAYPELKDKQSVIENAIQKEETQFAKTLAQGLRLLASELEGLKDGDTLSGEAAFKLYDTYGFPVDLTADITRERGIVIDEAEFDEHMQAQRERARDAGKFDVDYSSVIQVENPTTFIGYEQLEEEGVTIDALYQDGNPADSLTEGMEGVIVLDRTPFYAEGGGQVGELGEIRTASGVFEVQDTKKSGQAIIHYGVVTMGDISTKQTADAQVLSSIRAASAKNHSATHLLHAALREVLGDAVTQKGSLVSSEVLRFDFSYDKPVSTAEITRIERLVNEQIQANTPARIENMSIDEAMKQGAMALFGEKYGSDVRVLTMGTGSIIDGQRKPFSIELCGGLHVKRTGDIGVLKITSESGIAAGIRRIEAVTGMNAIKNIQQSEQQLSELASQLKVKRPEVAQRVRTMADKQRELEKQLERLEQKIASAQAANLLDDVQTIAGTPVLISTLSGIDGKSIRTLMDDIKSKLPDSVIVLIGDKDEQLALAASVAKSVTAKVKAGDIIRHLASELGGKGGGKPDYAQGGAPKAANTNAVVNALPAWIADQLG.

Zn(2+) contacts are provided by H568, H572, C680, and H684.

The protein belongs to the class-II aminoacyl-tRNA synthetase family. It depends on Zn(2+) as a cofactor.

The protein localises to the cytoplasm. It carries out the reaction tRNA(Ala) + L-alanine + ATP = L-alanyl-tRNA(Ala) + AMP + diphosphate. Functionally, catalyzes the attachment of alanine to tRNA(Ala) in a two-step reaction: alanine is first activated by ATP to form Ala-AMP and then transferred to the acceptor end of tRNA(Ala). Also edits incorrectly charged Ser-tRNA(Ala) and Gly-tRNA(Ala) via its editing domain. In Psychrobacter cryohalolentis (strain ATCC BAA-1226 / DSM 17306 / VKM B-2378 / K5), this protein is Alanine--tRNA ligase.